Reading from the N-terminus, the 462-residue chain is Cysteine--tRNA ligase (462 aa).

Zn(2+) is bound at residue Cys-30. Residues 32–42 (PTVYDRAHLGN) carry the 'HIGH' region motif. Residues Cys-221, His-246, and Glu-250 each coordinate Zn(2+). A 'KMSKS' region motif is present at residues 279-283 (KMSKS). Lys-282 lines the ATP pocket.

The protein belongs to the class-I aminoacyl-tRNA synthetase family. As to quaternary structure, monomer. Zn(2+) is required as a cofactor.

Its subcellular location is the cytoplasm. It catalyses the reaction tRNA(Cys) + L-cysteine + ATP = L-cysteinyl-tRNA(Cys) + AMP + diphosphate. This is Cysteine--tRNA ligase from Paracoccus denitrificans (strain Pd 1222).